A 57-amino-acid polypeptide reads, in one-letter code: Sperm histone (57 aa).

The tract at residues 1-57 is disordered; sequence MARYRRTRTRSRSRRRRRSRRRRSSRRRRYGRSRRSYRSVGRRRRRYGRRRRRRRRY. A Phosphothreonine modification is found at T9.

Belongs to the protamine P1 family. In terms of tissue distribution, testis.

It is found in the nucleus. It localises to the chromosome. Its function is as follows. Protamines substitute for histones in the chromatin of sperm during the haploid phase of spermatogenesis. They compact sperm DNA into a highly condensed, stable and inactive complex. This is Sperm histone from Coturnix japonica (Japanese quail).